Here is a 432-residue protein sequence, read N- to C-terminus: Adenylosuccinate synthetase (432 aa).

GTP is bound by residues 12–18 (GDEGKGK) and 40–42 (GHT). Aspartate 13 acts as the Proton acceptor in catalysis. Residues aspartate 13 and glycine 40 each coordinate Mg(2+). Residues 13-16 (DEGK), 38-41 (NAGH), threonine 130, arginine 144, glutamine 225, threonine 240, and arginine 304 contribute to the IMP site. The active-site Proton donor is histidine 41. 300-306 (STTGRPR) lines the substrate pocket. GTP is bound by residues arginine 306, 332-334 (KLD), and 414-416 (SVG).

This sequence belongs to the adenylosuccinate synthetase family. Homodimer. The cofactor is Mg(2+).

It localises to the cytoplasm. It carries out the reaction IMP + L-aspartate + GTP = N(6)-(1,2-dicarboxyethyl)-AMP + GDP + phosphate + 2 H(+). Its pathway is purine metabolism; AMP biosynthesis via de novo pathway; AMP from IMP: step 1/2. Plays an important role in the de novo pathway of purine nucleotide biosynthesis. Catalyzes the first committed step in the biosynthesis of AMP from IMP. In Citrifermentans bemidjiense (strain ATCC BAA-1014 / DSM 16622 / JCM 12645 / Bem) (Geobacter bemidjiensis), this protein is Adenylosuccinate synthetase.